The chain runs to 414 residues: 3-ketoacyl-CoA thiolase, peroxisomal (414 aa).

The N-terminal 9 residues, 1 to 9 (MDRLNNLAT), are a transit peptide targeting the peroxisome. The tract at residues 1 to 9 (MDRLNNLAT) is PTS2-type peroxisomal targeting signal. Cys115 serves as the catalytic Acyl-thioester intermediate. Active-site proton acceptor residues include His370 and Cys400.

This sequence belongs to the thiolase-like superfamily. Thiolase family. In terms of assembly, homodimer. Interacts (via PTS2-type peroxisomal targeting signal region) with PEX7; leading to its translocation into peroxisomes.

It localises to the peroxisome. The catalysed reaction is an acyl-CoA + acetyl-CoA = a 3-oxoacyl-CoA + CoA. The protein operates within lipid metabolism; fatty acid metabolism. Its function is as follows. Responsible for the thiolytic cleavage of straight chain 3-keto fatty acyl-CoAs (3-oxoacyl-CoAs). The sequence is that of 3-ketoacyl-CoA thiolase, peroxisomal (POT1) from Yarrowia lipolytica (strain CLIB 122 / E 150) (Yeast).